Here is a 295-residue protein sequence, read N- to C-terminus: Protoheme IX farnesyltransferase (295 aa).

Helical transmembrane passes span 8–28 (VTKPGIIFGNLISVIGGFLLA), 35–55 (YPLFLFTLVGVSLVVASGCVF), 74–94 (VLVKGLISPKMSLVYATLLGI), 106–125 (PLAMWLAVMGFVVYVGVYSL), 132–152 (VYGTLIGSLSGAAPPVIGYCA), 162–182 (LILLAIFSLWQMPHSYAIAIF), 208–228 (ITLYIIAFAVATLMLSLGGYA), 233–253 (LVVAAAVSVWWLGMALRGYKA), and 264–284 (FVFSIVAITSLSVMMSVDFMV).

The protein belongs to the UbiA prenyltransferase family. Protoheme IX farnesyltransferase subfamily.

It localises to the cell inner membrane. The enzyme catalyses heme b + (2E,6E)-farnesyl diphosphate + H2O = Fe(II)-heme o + diphosphate. It functions in the pathway porphyrin-containing compound metabolism; heme O biosynthesis; heme O from protoheme: step 1/1. Converts heme B (protoheme IX) to heme O by substitution of the vinyl group on carbon 2 of heme B porphyrin ring with a hydroxyethyl farnesyl side group. The polypeptide is Protoheme IX farnesyltransferase (Cronobacter sakazakii (strain ATCC BAA-894) (Enterobacter sakazakii)).